Consider the following 712-residue polypeptide: 1,4-alpha-glucan branching enzyme GlgB (712 aa).

Catalysis depends on aspartate 397, which acts as the Nucleophile. Glutamate 450 acts as the Proton donor in catalysis.

It belongs to the glycosyl hydrolase 13 family. GlgB subfamily. Monomer.

It carries out the reaction Transfers a segment of a (1-&gt;4)-alpha-D-glucan chain to a primary hydroxy group in a similar glucan chain.. It participates in glycan biosynthesis; glycogen biosynthesis. Its function is as follows. Catalyzes the formation of the alpha-1,6-glucosidic linkages in glycogen by scission of a 1,4-alpha-linked oligosaccharide from growing alpha-1,4-glucan chains and the subsequent attachment of the oligosaccharide to the alpha-1,6 position. This is 1,4-alpha-glucan branching enzyme GlgB from Bradyrhizobium sp. (strain ORS 278).